Consider the following 257-residue polypeptide: Phosphonates import ATP-binding protein PhnC (257 aa).

In terms of domain architecture, ABC transporter spans 7–251 (IQLKDVSKIY…VFTDIYNGGD (245 aa)). 40-47 (GLSGAGKS) provides a ligand contact to ATP.

Belongs to the ABC transporter superfamily. Phosphonates importer (TC 3.A.1.9.1) family. As to quaternary structure, the complex is composed of two ATP-binding proteins (PhnC), two transmembrane proteins (PhnE) and a solute-binding protein (PhnD).

It is found in the cell membrane. It carries out the reaction phosphonate(out) + ATP + H2O = phosphonate(in) + ADP + phosphate + H(+). Part of the ABC transporter complex PhnCDE involved in phosphonates import. Responsible for energy coupling to the transport system. This Lactobacillus acidophilus (strain ATCC 700396 / NCK56 / N2 / NCFM) protein is Phosphonates import ATP-binding protein PhnC.